We begin with the raw amino-acid sequence, 148 residues long: Large ribosomal subunit protein bL9 (148 aa).

This sequence belongs to the bacterial ribosomal protein bL9 family.

Functionally, binds to the 23S rRNA. This is Large ribosomal subunit protein bL9 from Acidithiobacillus ferrooxidans (strain ATCC 23270 / DSM 14882 / CIP 104768 / NCIMB 8455) (Ferrobacillus ferrooxidans (strain ATCC 23270)).